Here is a 178-residue protein sequence, read N- to C-terminus: uncharacterized protein (178 aa).

This is an uncharacterized protein from Schizosaccharomyces pombe (strain 972 / ATCC 24843) (Fission yeast).